The following is a 172-amino-acid chain: Envelope protein UL45 (172 aa).

Over 1 to 27 the chain is Intravirion; sequence MPLRASEHAYRPLGPGTPPVRARLPAA. Residues 28–48 form a helical; Signal-anchor for type II membrane protein membrane-spanning segment; sequence AWVGVGTIIGGVVIIAALVLV. Residues 49–172 are Virion surface-facing; the sequence is PSRASWALSP…TSTRNALGLP (124 aa).

The protein belongs to the herpesviridae HHV-1 UL45 family.

It is found in the virion membrane. In terms of biological role, important virulence factor of HSV neurotropism. Seems to be required for glycoprotein B-induced fusion. Dispensable for growth in vitro. This is Envelope protein UL45 from Homo sapiens (Human).